A 366-amino-acid chain; its full sequence is Ferredoxin--NADP reductase (366 aa).

Positions 51, 59, 64, 104, 139, 308, and 349 each coordinate FAD.

Belongs to the ferredoxin--NADP reductase type 2 family. In terms of assembly, homodimer. Requires FAD as cofactor.

It carries out the reaction 2 reduced [2Fe-2S]-[ferredoxin] + NADP(+) + H(+) = 2 oxidized [2Fe-2S]-[ferredoxin] + NADPH. The sequence is that of Ferredoxin--NADP reductase from Polaromonas sp. (strain JS666 / ATCC BAA-500).